The primary structure comprises 338 residues: 4-hydroxythreonine-4-phosphate dehydrogenase (338 aa).

Substrate contacts are provided by histidine 140 and threonine 141. Histidine 172, histidine 217, and histidine 271 together coordinate a divalent metal cation. 3 residues coordinate substrate: lysine 279, asparagine 288, and arginine 297.

This sequence belongs to the PdxA family. As to quaternary structure, homodimer. The cofactor is a divalent metal cation.

The protein localises to the cytoplasm. It carries out the reaction 4-(phosphooxy)-L-threonine + NAD(+) = 3-amino-2-oxopropyl phosphate + CO2 + NADH. It functions in the pathway cofactor biosynthesis; pyridoxine 5'-phosphate biosynthesis; pyridoxine 5'-phosphate from D-erythrose 4-phosphate: step 4/5. Functionally, catalyzes the NAD(P)-dependent oxidation of 4-(phosphooxy)-L-threonine (HTP) into 2-amino-3-oxo-4-(phosphooxy)butyric acid which spontaneously decarboxylates to form 3-amino-2-oxopropyl phosphate (AHAP). The protein is 4-hydroxythreonine-4-phosphate dehydrogenase of Prosthecochloris aestuarii (strain DSM 271 / SK 413).